Reading from the N-terminus, the 917-residue chain is MDYKETLLLPSTTFAMRANLAELEPQRFKKWFEQNYAYEKMKENRKNAKKSFTLHDGPPYANGHIHIGHALNKILKETIIKTHYFKGESVRFTPGWDCHGLPIEQQVEVKLGEKKKSLSKKEIREFCRQHASEFVDIQREEFKDLGIIADWDKPYLTMKFEFEAAIYRTLCEIAKKGLLCERSKPVFWSWAAKSALAEAEVEYQDKEDYSIFVAFDLDVKACEKLGVSKASAVIWTTTPWTLVANQAIALNPNENYVITKEGLIFASALLKSMVEKGLTSGEIQKELNAKEFEKLEAINPLNGRKSVLIMGEHVLMDGGSGLVHTAPGHGEDDYYACLKYGIEVLMPVDDSGCYDETLRAKGLLPSHLLEEFIGLHIFKANEKILELLGEKLLHSSKFIHSYPFCWRTHKPVIYRATKQWFILMDEPKLQGKTLRECAKEQLLKTTFYPQSGVKRIGSMVENRPDWCISRQRDWGTPIAFFRDKNTKEVIFDDELFDFVAAIFEKHGADAWWEFEIKDLIPTNSKYKAENLEKVYDILDVWFDSGSTFNAVLNSGLYDAGEKRASMYLEGSDQHRGWFQSSLLVGTAINESAPYESILTHGFTTDEKGQKMSKSKGNVIASEYVAKTYGVEILRLWILLSDYSSDLKISDNILKQVGEQYRKIRNTIRFLLANTNDLKDLEVKEFSFIDKWILSRATKVFKASKEAFFAYEFAKGFSLLLNFLSADLSGIYLDISKDRLYCDSENAQRRKSAQVAMALMAKELLNLLAPNLSYSVDEALEHANVLIKGDAKDVFDLSLTQDFDYDFGIDDTFLMSAREKFFEQIDILKKDKIIKSTLELNLNISFNKFPNEELADWFMVSQISNENEEILAEFEVENEKFKITKASLCKCPRCWKLQSKNEETPCLRCEEVLKGVQC.

The 'HIGH' region motif lies at 59-69; sequence PYANGHIHIGH. Glu-569 lines the L-isoleucyl-5'-AMP pocket. A 'KMSKS' region motif is present at residues 610-614; sequence KMSKS. Lys-613 lines the ATP pocket. Zn(2+) contacts are provided by Cys-890, Cys-893, Cys-905, and Cys-908.

Belongs to the class-I aminoacyl-tRNA synthetase family. IleS type 1 subfamily. In terms of assembly, monomer. The cofactor is Zn(2+).

The protein localises to the cytoplasm. It catalyses the reaction tRNA(Ile) + L-isoleucine + ATP = L-isoleucyl-tRNA(Ile) + AMP + diphosphate. Catalyzes the attachment of isoleucine to tRNA(Ile). As IleRS can inadvertently accommodate and process structurally similar amino acids such as valine, to avoid such errors it has two additional distinct tRNA(Ile)-dependent editing activities. One activity is designated as 'pretransfer' editing and involves the hydrolysis of activated Val-AMP. The other activity is designated 'posttransfer' editing and involves deacylation of mischarged Val-tRNA(Ile). The protein is Isoleucine--tRNA ligase of Campylobacter jejuni subsp. jejuni serotype O:2 (strain ATCC 700819 / NCTC 11168).